Consider the following 460-residue polypeptide: Argininosuccinate lyase (460 aa).

It belongs to the lyase 1 family. Argininosuccinate lyase subfamily.

Its subcellular location is the cytoplasm. It carries out the reaction 2-(N(omega)-L-arginino)succinate = fumarate + L-arginine. The protein operates within amino-acid biosynthesis; L-arginine biosynthesis; L-arginine from L-ornithine and carbamoyl phosphate: step 3/3. The sequence is that of Argininosuccinate lyase from Alteromonas mediterranea (strain DSM 17117 / CIP 110805 / LMG 28347 / Deep ecotype).